The sequence spans 154 residues: Probable transcription factor At4g00232 (154 aa).

A disordered region spans residues 1 to 44; the sequence is MDKANTNRSKVCGGSGEAKLTGKKRKNVSAKQSKKDAKKENSQM.

This sequence belongs to the GeBP family.

This chain is Probable transcription factor At4g00232, found in Arabidopsis thaliana (Mouse-ear cress).